Reading from the N-terminus, the 645-residue chain is MSSLISFIFLFLFSSITASAQNTFYLYHNCSVTTTFSSNSTYSTNLKTLLSSLSSLNASSYSTGFQTATAGQAPDRVTGLFLCRVDVSSEVCRSCVTFAVNETLTRCPKDKEGVFYYEQCLLRYSNRNIVATLNTDGGMFMQSARNPLSVKQDQFRDLVLTPMNLAAVEAARSFKKWAVRKIDLNASQSLYGMVRCTPDLREQDCLDCLKIGINQVTYDKIGGRILLPSCASRYDNYAFYNESNVGTPQDSSPRPGKGGNSSVIIIAVVVPITVLFLLLVAVFSVRAKNKRTLNEKEPVAEDGNDITTAGSLQFDFKAIEAATNCFLPINKLGQGGFGEVYKGTLSSGLQVAVKRLSKTSGQGEKEFENEVVVVAKLQHRNLVKLLGYCLEGEEKILVYEFVPNKSLDHFLFDSTMKMKLDWTRRYKIIGGIARGILYLHQDSRLTIIHRDLKAGNILLDDDMNPKIADFGMARIFGMDQTEAMTRRVVGTYGYMSPEYAMYGQFSMKSDVYSFGVLVLEIISGMKNSSLYQMDESVGNLVTYTWRLWSNGSPSELVDPSFGDNYQTSEITRCIHIALLCVQEDAEDRPTMSSIVQMLTTSLIALAEPRPPGFFFRSKQEQAGPSIDSSTHCSVDEASITRVTPR.

The first 20 residues, Met-1 to Ala-20, serve as a signal peptide directing secretion. Residues Gln-21–Ser-262 are Extracellular-facing. 2 consecutive Gnk2-homologous domains span residues Phe-24–Ile-129 and Thr-135–Phe-239. N-linked (GlcNAc...) asparagine glycosylation is found at Asn-29, Asn-39, Asn-57, Asn-101, Asn-185, Asn-241, and Asn-260. The chain crosses the membrane as a helical span at residues Val-263–Phe-283. At Ser-284–Arg-645 the chain is on the cytoplasmic side. The 278-residue stretch at Phe-326–Ile-603 folds into the Protein kinase domain. ATP contacts are provided by residues Leu-332–Val-340 and Lys-354. A Phosphotyrosine modification is found at Tyr-399. The active-site Proton acceptor is Asp-451. Position 491 is a phosphothreonine (Thr-491). Tyr-499 bears the Phosphotyrosine mark. The segment at Arg-616–Arg-645 is disordered. Residues Glu-620–Cys-632 show a composition bias toward polar residues.

It belongs to the protein kinase superfamily. Ser/Thr protein kinase family. CRK subfamily. As to quaternary structure, interacts with MWL1.

Its subcellular location is the membrane. The enzyme catalyses L-seryl-[protein] + ATP = O-phospho-L-seryl-[protein] + ADP + H(+). It catalyses the reaction L-threonyl-[protein] + ATP = O-phospho-L-threonyl-[protein] + ADP + H(+). The protein is Cysteine-rich receptor-like protein kinase 19 (CRK19) of Arabidopsis thaliana (Mouse-ear cress).